Reading from the N-terminus, the 315-residue chain is Phosphatidylglycerol--prolipoprotein diacylglyceryl transferase (315 aa).

A run of 2 helical transmembrane segments spans residues 19–39 (FTIHMYAICILIGICVAVWIL) and 93–113 (VWEGGMAIFGGISVGTLVAFL). Residue arginine 141 participates in a 1,2-diacyl-sn-glycero-3-phospho-(1'-sn-glycerol) binding. 2 helical membrane-spanning segments follow: residues 188–208 (LFHPTFLYEMIWNLIGAALII) and 256–276 (VWTAIIVFVLGCILFVVLYQY).

It belongs to the Lgt family.

The protein localises to the cell membrane. It catalyses the reaction L-cysteinyl-[prolipoprotein] + a 1,2-diacyl-sn-glycero-3-phospho-(1'-sn-glycerol) = an S-1,2-diacyl-sn-glyceryl-L-cysteinyl-[prolipoprotein] + sn-glycerol 1-phosphate + H(+). The protein operates within protein modification; lipoprotein biosynthesis (diacylglyceryl transfer). Catalyzes the transfer of the diacylglyceryl group from phosphatidylglycerol to the sulfhydryl group of the N-terminal cysteine of a prolipoprotein, the first step in the formation of mature lipoproteins. This is Phosphatidylglycerol--prolipoprotein diacylglyceryl transferase from Bifidobacterium longum (strain NCC 2705).